A 398-amino-acid polypeptide reads, in one-letter code: Inner membrane protein YjgN (398 aa).

The Cytoplasmic segment spans residues 1-24; it reads MAQVINEMDVPSHSFVFHGTGERY. A helical membrane pass occupies residues 25–45; the sequence is FLICVVNVLLTIITLGIYLPW. The Periplasmic portion of the chain corresponds to 46-73; the sequence is ALMKCKRYLYANMEVNGQRFSYGITGGN. Residues 74 to 94 form a helical membrane-spanning segment; it reads VFVSCLFFVFFYFAILMTVSA. Position 95 (Asp-95) is a topological domain, cytoplasmic. A helical membrane pass occupies residues 96–116; sequence MPLVGCVLTLLLLVLLIFMAA. The Periplasmic segment spans residues 117 to 142; sequence KGLRHQALMTSLNGVRFSFNCSMKGF. The helical transmembrane segment at 143 to 163 threads the bilayer; it reads WWVTFFLPILMAIGMGTVFFI. The Cytoplasmic portion of the chain corresponds to 164–175; sequence STKMLPANSSSS. Residues 176-196 form a helical membrane-spanning segment; sequence VIISMVLMAIVGIVSIGIFNG. The Periplasmic portion of the chain corresponds to 197 to 228; that stretch reads TLYSLVMSFLWSNTSFGIHRFKVKLDTTYCIK. The helical transmembrane segment at 229 to 249 threads the bilayer; that stretch reads YAILAFLALLPFLAVAGYIIF. Over 250–278 the chain is Cytoplasmic; it reads DQILNAYDSSVYANDDIENLQQFMEMQRK. Residues 279-299 traverse the membrane as a helical segment; sequence MIIAQLIYYFGIAVSTSYLTV. Over 300 to 333 the chain is Periplasmic; it reads SLRNHFMSNLSLNDGRIRFRLTLTYHGMLYRMCA. Residues 334–354 traverse the membrane as a helical segment; that stretch reads LVVISGITGGLAYPLLKIWMI. Residues 355–398 lie on the Cytoplasmic side of the membrane; the sequence is DWQAKNTYLLGDLDDLPLINKEEQPDKGFLASISRGVMPSLPFL.

Its subcellular location is the cell inner membrane. The polypeptide is Inner membrane protein YjgN (yjgN) (Escherichia coli (strain K12)).